The following is a 206-amino-acid chain: Large ribosomal subunit protein uL4 (206 aa).

This sequence belongs to the universal ribosomal protein uL4 family. In terms of assembly, part of the 50S ribosomal subunit.

Its function is as follows. One of the primary rRNA binding proteins, this protein initially binds near the 5'-end of the 23S rRNA. It is important during the early stages of 50S assembly. It makes multiple contacts with different domains of the 23S rRNA in the assembled 50S subunit and ribosome. In terms of biological role, forms part of the polypeptide exit tunnel. This Desulfatibacillum aliphaticivorans protein is Large ribosomal subunit protein uL4.